Here is a 317-residue protein sequence, read N- to C-terminus: tRNA-dihydrouridine(20a/20b) synthase [NAD(P)+]-like (317 aa).

FMN is bound by residues Pro33 to Val35 and Gln87. Cys116 serves as the catalytic Proton donor. FMN-binding positions include Lys158, His186, Asn216 to Asp218, and Ala240 to Arg241.

It belongs to the Dus family. Dus4 subfamily. FMN serves as cofactor.

It catalyses the reaction 5,6-dihydrouridine(20a) in tRNA + NADP(+) = uridine(20a) in tRNA + NADPH + H(+). The enzyme catalyses 5,6-dihydrouridine(20a) in tRNA + NAD(+) = uridine(20a) in tRNA + NADH + H(+). The catalysed reaction is 5,6-dihydrouridine(20b) in tRNA + NAD(+) = uridine(20b) in tRNA + NADH + H(+). It carries out the reaction 5,6-dihydrouridine(20b) in tRNA + NADP(+) = uridine(20b) in tRNA + NADPH + H(+). In terms of biological role, catalyzes the synthesis of dihydrouridine, a modified base found in the D-loop of most tRNAs. This chain is tRNA-dihydrouridine(20a/20b) synthase [NAD(P)+]-like (DUS4L), found in Homo sapiens (Human).